Consider the following 270-residue polypeptide: Phosphatidylglycerol--prolipoprotein diacylglyceryl transferase (270 aa).

Helical transmembrane passes span 19 to 39 (FPVYWYGIIIGTGVLLGLWLA), 53 to 73 (FVDLVLFAVPIAIICARAYYV), 92 to 112 (QGGLAIHGGLIGAVMTGIIYA), and 117 to 137 (ISFWKLADIAAPSILLGQAIG). Arg138 is a binding site for a 1,2-diacyl-sn-glycero-3-phospho-(1'-sn-glycerol). The next 3 membrane-spanning stretches (helical) occupy residues 178–198 (HPTFLYESLWSFAGVILLLLL), 206–226 (GELFFTYLIWYSIGRFFVEEL), and 236–256 (LRIAQVMSIGLIVISIIFIIV).

The protein belongs to the Lgt family.

It is found in the cell membrane. The enzyme catalyses L-cysteinyl-[prolipoprotein] + a 1,2-diacyl-sn-glycero-3-phospho-(1'-sn-glycerol) = an S-1,2-diacyl-sn-glyceryl-L-cysteinyl-[prolipoprotein] + sn-glycerol 1-phosphate + H(+). It participates in protein modification; lipoprotein biosynthesis (diacylglyceryl transfer). Catalyzes the transfer of the diacylglyceryl group from phosphatidylglycerol to the sulfhydryl group of the N-terminal cysteine of a prolipoprotein, the first step in the formation of mature lipoproteins. The polypeptide is Phosphatidylglycerol--prolipoprotein diacylglyceryl transferase (Bacillus cytotoxicus (strain DSM 22905 / CIP 110041 / 391-98 / NVH 391-98)).